A 246-amino-acid chain; its full sequence is Large ribosomal subunit protein uL3 (246 aa).

Disordered regions lie at residues 140-162 (SHRS…NKKM) and 215-246 (DVPL…EENA). Residue Gln151 is modified to N5-methylglutamine. Over residues 234–246 (EAAPEAPASEENA) the composition is skewed to low complexity.

Belongs to the universal ribosomal protein uL3 family. As to quaternary structure, part of the 50S ribosomal subunit. Forms a cluster with proteins L14 and L19. In terms of processing, methylated by PrmB.

Functionally, one of the primary rRNA binding proteins, it binds directly near the 3'-end of the 23S rRNA, where it nucleates assembly of the 50S subunit. The polypeptide is Large ribosomal subunit protein uL3 (Methylorubrum extorquens (strain PA1) (Methylobacterium extorquens)).